The primary structure comprises 399 residues: uncharacterized protein (399 aa).

9 helical membrane-spanning segments follow: residues 46 to 66 (IAPYLITLTGTITILLSFFIV), 76 to 95 (TLPRWVYAMSGLTLFFYQTM), 139 to 159 (GVGYISLIQLFITALLPFWMA), 181 to 201 (IIIIVCALLSTAIFGNAFWTF), 226 to 246 (LMLNEIIVASLSLPCLITCFF), 262 to 282 (ILPALKHILVWVIITVSSFIW), 303 to 323 (VQFSIGIIFGELVSRLILAHM), 330 to 350 (IIQAPLYPLILSTFCSTINYF), and 352 to 372 (GTIIIPENLLLILFTVTSFVH).

The protein belongs to the CDP-alcohol phosphatidyltransferase class-I family.

The protein localises to the membrane. This is an uncharacterized protein from Dictyostelium discoideum (Social amoeba).